Reading from the N-terminus, the 356-residue chain is Histidinol-phosphate aminotransferase (356 aa).

The residue at position 211 (lysine 211) is an N6-(pyridoxal phosphate)lysine.

This sequence belongs to the class-II pyridoxal-phosphate-dependent aminotransferase family. Histidinol-phosphate aminotransferase subfamily. In terms of assembly, homodimer. Requires pyridoxal 5'-phosphate as cofactor.

It catalyses the reaction L-histidinol phosphate + 2-oxoglutarate = 3-(imidazol-4-yl)-2-oxopropyl phosphate + L-glutamate. Its pathway is amino-acid biosynthesis; L-histidine biosynthesis; L-histidine from 5-phospho-alpha-D-ribose 1-diphosphate: step 7/9. The chain is Histidinol-phosphate aminotransferase from Aeromonas hydrophila subsp. hydrophila (strain ATCC 7966 / DSM 30187 / BCRC 13018 / CCUG 14551 / JCM 1027 / KCTC 2358 / NCIMB 9240 / NCTC 8049).